Consider the following 378-residue polypeptide: Spermidine/putrescine import ATP-binding protein PotA (378 aa).

Residues 18–248 form the ABC transporter domain; sequence VLLSGISKSF…PKNLFVAGFI (231 aa). 50-57 is a binding site for ATP; that stretch reads GPSGCGKT.

Belongs to the ABC transporter superfamily. Spermidine/putrescine importer (TC 3.A.1.11.1) family. In terms of assembly, the complex is composed of two ATP-binding proteins (PotA), two transmembrane proteins (PotB and PotC) and a solute-binding protein (PotD).

It localises to the cell inner membrane. It carries out the reaction ATP + H2O + polyamine-[polyamine-binding protein]Side 1 = ADP + phosphate + polyamineSide 2 + [polyamine-binding protein]Side 1.. Its function is as follows. Part of the ABC transporter complex PotABCD involved in spermidine/putrescine import. Responsible for energy coupling to the transport system. This Salmonella typhi protein is Spermidine/putrescine import ATP-binding protein PotA.